A 235-amino-acid polypeptide reads, in one-letter code: Glutathione S-transferase 1 (235 aa).

Positions 36–113 (EKYTLTYFNG…LLGGRFGLLG (78 aa)) constitute a GST N-terminal domain. Residues tyrosine 42, tryptophan 73, lysine 77, valine 85, and 97–98 (ES) each bind glutathione. Positions 115–235 (NDWEEAKIMA…WIKKRPKTYF (121 aa)) constitute a GST C-terminal domain.

Belongs to the GST superfamily. In terms of assembly, homodimer.

It catalyses the reaction RX + glutathione = an S-substituted glutathione + a halide anion + H(+). This is Glutathione S-transferase 1 (GST1) from Onchocerca volvulus.